The chain runs to 841 residues: pre-rRNA 2'-O-ribose RNA methyltransferase FTSJ3 (841 aa).

5 residues coordinate S-adenosyl-L-methionine: G56, W58, D76, D92, and D117. Catalysis depends on K157, which acts as the Proton acceptor. Residues 332-366 (ISLSSGEEDEGNEEDSTAGTTEQPSKEEEEEEQLN) form a disordered region. 5 positions are modified to phosphoserine: S333, S335, S336, S347, and S356. A compositionally biased stretch (acidic residues) spans 337–347 (GEEDEGNEEDS). A coiled-coil region spans residues 356 to 404 (SKEEEEEEQLNQTLAEMKAQEVAELKRKKKKLLREQRKQRERVELKMDL). K357 is covalently cross-linked (Glycyl lysine isopeptide (Lys-Gly) (interchain with G-Cter in SUMO2)). R389 is subject to Citrulline. The segment at 454–482 (VSDVEDDGDDTSLDSDLDPEELAGVRGHQ) is disordered. Acidic residues predominate over residues 456-474 (DVEDDGDDTSLDSDLDPEE). S547 bears the Phosphoserine mark. The residue at position 567 (T567) is a Phosphothreonine. Residue K573 forms a Glycyl lysine isopeptide (Lys-Gly) (interchain with G-Cter in SUMO2) linkage. S578 is subject to Phosphoserine. The tract at residues 579–654 (PLYQDEAPKG…IVPIEDPAKH (76 aa)) is disordered. K637 participates in a covalent cross-link: Glycyl lysine isopeptide (Lys-Gly) (interchain with G-Cter in SUMO2). S638 carries the post-translational modification Phosphoserine. Residue K653 forms a Glycyl lysine isopeptide (Lys-Gly) (interchain with G-Cter in SUMO2) linkage. Phosphoserine is present on S670. A Glycyl lysine isopeptide (Lys-Gly) (interchain with G-Cter in SUMO2) cross-link involves residue K672. S682 carries the post-translational modification Phosphoserine. K704 participates in a covalent cross-link: Glycyl lysine isopeptide (Lys-Gly) (interchain with G-Cter in SUMO2). The stretch at 733–771 (IKKVAEAKARKKRRMLKRLEQTRKKAEAVVNTVDISERE) forms a coiled coil. The residue at position 777 (R777) is a Citrulline. A compositionally biased stretch (basic residues) spans 805–815 (VRRPAGVRGHF). Residues 805 to 841 (VRRPAGVRGHFKVVDSRMKKDQRAQQRKEQKKKHKRK) are disordered. Positions 816-832 (KVVDSRMKKDQRAQQRK) are enriched in basic and acidic residues.

The protein belongs to the class I-like SAM-binding methyltransferase superfamily. RNA methyltransferase RlmE family. SPB1 subfamily. Interacts with NIP7. Post-translationally, citrullinated by PADI4.

The protein resides in the nucleus. It is found in the nucleolus. The enzyme catalyses a ribonucleotide in rRNA + S-adenosyl-L-methionine = a 2'-O-methylribonucleotide in rRNA + S-adenosyl-L-homocysteine + H(+). Functionally, RNA 2'-O-methyltransferase involved in the processing of the 34S pre-rRNA to 18S rRNA and in 40S ribosomal subunit formation. This chain is pre-rRNA 2'-O-ribose RNA methyltransferase FTSJ3, found in Pongo abelii (Sumatran orangutan).